The primary structure comprises 239 residues: Superoxide dismutase [Mn] 3 (239 aa).

Polar residues predominate over residues 1–19 (ASTQQTPAQSPTASPTVST). The interval 1–20 (ASTQQTPAQSPTASPTVSTP) is disordered. The first 30 residues, 1 to 30 (ASTQQTPAQSPTASPTVSTPVAYVDRPLTA), serve as a signal peptide directing secretion. Mn(2+) contacts are provided by histidine 57, histidine 112, aspartate 195, and histidine 199.

Belongs to the iron/manganese superoxide dismutase family. As to quaternary structure, homodimer. It depends on Mn(2+) as a cofactor.

It carries out the reaction 2 superoxide + 2 H(+) = H2O2 + O2. Destroys superoxide anion radicals which are normally produced within the cells and which are toxic to biological systems. The sequence is that of Superoxide dismutase [Mn] 3 (sodA3) from Leptolyngbya boryana (Plectonema boryanum).